A 135-amino-acid chain; its full sequence is Ribonuclease P protein component 2 (135 aa).

The protein belongs to the eukaryotic/archaeal RNase P protein component 2 family. As to quaternary structure, consists of a catalytic RNA component and at least 4-5 protein subunits.

It is found in the cytoplasm. The enzyme catalyses Endonucleolytic cleavage of RNA, removing 5'-extranucleotides from tRNA precursor.. Functionally, part of ribonuclease P, a protein complex that generates mature tRNA molecules by cleaving their 5'-ends. The polypeptide is Ribonuclease P protein component 2 (Methanosarcina barkeri (strain Fusaro / DSM 804)).